Reading from the N-terminus, the 1032-residue chain is Putative oxidoreductase YgfK (1032 aa).

The 4Fe-4S ferredoxin-type domain maps to 928–958 (RFQTLHLDAYCNECGNCAQFCPWNGKPYKDK). Residues Cys-938, Cys-941, Cys-944, and Cys-948 each contribute to the [4Fe-4S] cluster site.

Requires [4Fe-4S] cluster as cofactor.

Could be an iron-sulfur flavoprotein with NADPH:O(2) oxidoreductase activity. This Escherichia coli (strain K12) protein is Putative oxidoreductase YgfK (ygfK).